We begin with the raw amino-acid sequence, 325 residues long: uncharacterized protein (325 aa).

The disordered stretch occupies residues 1–75 (MSQPPEHPGN…PPPGYPTHLQ (75 aa)). A compositionally biased stretch (pro residues) spans 24–70 (YPPPGYGAPPPPPGYGPPPGTYLPPGYNAPPPPPGYGPPPGPPPPGY). 4 helical membrane passes run 96–116 (AVTL…VIGA), 153–173 (IVMF…HAGI), 205–225 (LLIV…GLIF), and 273–293 (LVGE…AALI).

The protein to M.tuberculosis Rv2560.

It is found in the cell membrane. This is an uncharacterized protein from Mycobacterium bovis (strain ATCC BAA-935 / AF2122/97).